A 343-amino-acid polypeptide reads, in one-letter code: Methionine import ATP-binding protein MetN 3 (343 aa).

The region spanning 2–241 (IELSNITKVF…PKTPLAQKFI (240 aa)) is the ABC transporter domain. Residue 38–45 (GASGAGKS) participates in ATP binding.

This sequence belongs to the ABC transporter superfamily. Methionine importer (TC 3.A.1.24) family. As to quaternary structure, the complex is composed of two ATP-binding proteins (MetN), two transmembrane proteins (MetI) and a solute-binding protein (MetQ).

It localises to the cell inner membrane. The catalysed reaction is L-methionine(out) + ATP + H2O = L-methionine(in) + ADP + phosphate + H(+). It catalyses the reaction D-methionine(out) + ATP + H2O = D-methionine(in) + ADP + phosphate + H(+). In terms of biological role, part of the ABC transporter complex MetNIQ involved in methionine import. Responsible for energy coupling to the transport system. This chain is Methionine import ATP-binding protein MetN 3, found in Pectobacterium atrosepticum (strain SCRI 1043 / ATCC BAA-672) (Erwinia carotovora subsp. atroseptica).